The sequence spans 62 residues: Large ribosomal subunit protein uL30 (62 aa).

This sequence belongs to the universal ribosomal protein uL30 family. Part of the 50S ribosomal subunit.

This chain is Large ribosomal subunit protein uL30, found in Cereibacter sphaeroides (strain ATCC 17029 / ATH 2.4.9) (Rhodobacter sphaeroides).